Consider the following 244-residue polypeptide: NAD-dependent protein deacetylase (244 aa).

The Deacetylase sirtuin-type domain occupies 1 to 244; the sequence is MSATERQLQY…IGDTCRQLRA (244 aa). 8 residues coordinate NAD(+): A27, T31, F38, R39, Q107, I109, D110, and H125. F38 provides a ligand contact to nicotinamide. 2 residues coordinate nicotinamide: I109 and D110. H125 serves as the catalytic Proton acceptor. Residues C133, C136, C153, and C156 each coordinate Zn(2+). Positions 192, 193, 217, and 235 each coordinate NAD(+).

It belongs to the sirtuin family. Class U subfamily. Zn(2+) is required as a cofactor.

Its subcellular location is the cytoplasm. The catalysed reaction is N(6)-acetyl-L-lysyl-[protein] + NAD(+) + H2O = 2''-O-acetyl-ADP-D-ribose + nicotinamide + L-lysyl-[protein]. Its function is as follows. NAD-dependent protein deacetylase which modulates the activities of several enzymes which are inactive in their acetylated form. This Chromobacterium violaceum (strain ATCC 12472 / DSM 30191 / JCM 1249 / CCUG 213 / NBRC 12614 / NCIMB 9131 / NCTC 9757 / MK) protein is NAD-dependent protein deacetylase.